Reading from the N-terminus, the 351-residue chain is L-threonine 3-dehydrogenase (351 aa).

C39 serves as a coordination point for Zn(2+). Residues T41 and H44 each act as charge relay system in the active site. Residues H64, E65, C94, C97, C100, and C108 each coordinate Zn(2+). Residues I176, D196, R201, 271 to 273 (LGI), and 295 to 296 (IY) contribute to the NAD(+) site.

The protein belongs to the zinc-containing alcohol dehydrogenase family. As to quaternary structure, homotetramer. The cofactor is Zn(2+).

Its subcellular location is the cytoplasm. The catalysed reaction is L-threonine + NAD(+) = (2S)-2-amino-3-oxobutanoate + NADH + H(+). It functions in the pathway amino-acid degradation; L-threonine degradation via oxydo-reductase pathway; glycine from L-threonine: step 1/2. Catalyzes the NAD(+)-dependent oxidation of L-threonine to 2-amino-3-ketobutyrate. The chain is L-threonine 3-dehydrogenase from Francisella tularensis subsp. tularensis (strain SCHU S4 / Schu 4).